The primary structure comprises 329 residues: Ubiquitin carboxyl-terminal hydrolase isozyme L5 (329 aa).

A UCH catalytic domain is found at 7–225; the sequence is EWCLMESDPG…IRFNLMAIVS (219 aa). Lysine 47 bears the N6-succinyllysine mark. Cysteine 88 functions as the Nucleophile in the catalytic mechanism. Lysine 158 bears the N6-acetyllysine mark. Residue histidine 164 is the Proton donor of the active site. An N6-succinyllysine modification is found at lysine 289. The ULD domain occupies 291 to 319; it reads NYLPFIMELLKTLAEHQQLIPLVEKAKEK. Residues 313-329 form an interaction with ADRM1 region; that stretch reads VEKAKEKQNAKKAQETK.

The protein belongs to the peptidase C12 family. Component of the 19S (PA700) regulatory complex of the 26S proteasome. Interacts with ADRM1 and NFRKB; in vitro ADRM1 and NFRKB compete for interaction with UCHL5. Component of the INO80 complex; specifically part of a complex module associated with N-terminus of INO80.

The protein localises to the cytoplasm. The protein resides in the nucleus. It catalyses the reaction Thiol-dependent hydrolysis of ester, thioester, amide, peptide and isopeptide bonds formed by the C-terminal Gly of ubiquitin (a 76-residue protein attached to proteins as an intracellular targeting signal).. Activated by ADRM1. Inhibited by interaction with NFRKB. Functionally, protease that specifically cleaves 'Lys-48'-linked polyubiquitin chains. Deubiquitinating enzyme associated with the 19S regulatory subunit of the 26S proteasome. Putative regulatory component of the INO80 complex; however is inactive in the INO80 complex and is activated by a transient interaction of the INO80 complex with the proteasome via ADRM1. The sequence is that of Ubiquitin carboxyl-terminal hydrolase isozyme L5 (UCHL5) from Homo sapiens (Human).